Reading from the N-terminus, the 233-residue chain is Protein DEHYDRATION-INDUCED 19 homolog 2 (233 aa).

Residues 176–215 form a disordered region; the sequence is DLHSDSSDNNFLLNKFPDDKTAERAEPSLSEKDQKERAQR. A compositionally biased stretch (basic and acidic residues) spans 191 to 214; the sequence is FPDDKTAERAEPSLSEKDQKERAQ.

Belongs to the Di19 family.

This Oryza sativa subsp. japonica (Rice) protein is Protein DEHYDRATION-INDUCED 19 homolog 2 (DI19-2).